The primary structure comprises 185 residues: MYIIVGLGNPGKKYSGTRHNVGFDVIDLLAHRLGITVNKLKHKALYGEARIGGEKVILAKPQTFMNLSGESIREMMQFYKIDPENLIVIYDDIDVKVGSLRIRQSGSAGTHNGMKSTIYQLQTDAFPRIRIGVGRPEFGDLSNYVLGSFTKDEIPLMKESLERATLTVESIVIDGIDKAMNRYNG.

A tRNA-binding site is contributed by tyrosine 14. The active-site Proton acceptor is the histidine 19. The tRNA site is built by phenylalanine 64, asparagine 66, and asparagine 112.

Belongs to the PTH family. In terms of assembly, monomer.

The protein resides in the cytoplasm. The enzyme catalyses an N-acyl-L-alpha-aminoacyl-tRNA + H2O = an N-acyl-L-amino acid + a tRNA + H(+). In terms of biological role, hydrolyzes ribosome-free peptidyl-tRNAs (with 1 or more amino acids incorporated), which drop off the ribosome during protein synthesis, or as a result of ribosome stalling. Its function is as follows. Catalyzes the release of premature peptidyl moieties from peptidyl-tRNA molecules trapped in stalled 50S ribosomal subunits, and thus maintains levels of free tRNAs and 50S ribosomes. This Alkaliphilus metalliredigens (strain QYMF) protein is Peptidyl-tRNA hydrolase.